A 44-amino-acid chain; its full sequence is uncharacterized protein (44 aa).

The signal sequence occupies residues 1–28; it reads MLRDLGRRVAIAAILSGIILGGMSISLA.

This is an uncharacterized protein from Bacillus subtilis (strain 168).